Consider the following 368-residue polypeptide: Polymerase delta-interacting protein 2 (368 aa).

The transit peptide at 1–51 directs the protein to the mitochondrion; the sequence is MAACTARRALAVGSRWWSRSLTGARWPRPLCAAAGAGAFSPASTTTTRRHL. An ApaG domain is found at 235–360; sequence RETTENIRVT…FSLESNKDEK (126 aa). Position 292 is a phosphothreonine (Thr292).

In terms of assembly, interacts with PCNA and POLD2. Interacts with SSBP1. Interacts with PRIMPOL; leading to enhance DNA polymerase activity of PRIMPOL. Interacts with POLH. Interacts with POLD1; leading to stimulate DNA polymerase activity of POLD1.

Its subcellular location is the mitochondrion matrix. It is found in the nucleus. In terms of biological role, involved in DNA damage tolerance by regulating translesion synthesis (TLS) of templates carrying DNA damage lesions such as 8oxoG and abasic sites. May act by stimulating activity of DNA polymerases involved in TLS, such as PRIMPOL and polymerase delta (POLD1). The protein is Polymerase delta-interacting protein 2 of Homo sapiens (Human).